Here is an 837-residue protein sequence, read N- to C-terminus: Tuftelin-interacting protein 11 (837 aa).

The segment covering 1-13 has biased composition (basic and acidic residues); it reads MSLSHLYRDGEGH. 3 disordered regions span residues 1–31, 54–73, and 85–136; these read MSLS…DWDL, WAER…RARD, and LKKG…AGGT. Residues 1-50 form a required for interaction with DHX15 region; it reads MSLSHLYRDGEGHMDDDEDERENFEITDWDLQNEFNPNRQRHWQTKEEAT. Residue serine 2 is modified to Phosphoserine. Residues 14-28 are compositionally biased toward acidic residues; sequence MDDDEDERENFEITD. Residues 54–64 show a composition bias toward basic and acidic residues; that stretch reads WAERDSDEERP. A phosphoserine mark is found at serine 59 and serine 98. Over residues 91-102 the composition is skewed to acidic residues; the sequence is EEAELEDSDDEE. Residues 103-116 show a composition bias toward basic and acidic residues; it reads KPVKQDEFPKDFGP. At serine 144 the chain carries Phosphoserine. Residues 149 to 195 enclose the G-patch domain; sequence TKGIGQKLLQKMGYVPGRGLGKNAQGIINPIEAKQRKGKGAVGAYGS. Disordered regions lie at residues 183–236 and 287–313; these read QRKG…KKKP and HKHS…ARAP. A Phosphoserine modification is found at serine 210. A compositionally biased stretch (basic and acidic residues) spans 217-231; that stretch reads EFQKELSQWRKDPSG. A Nuclear localization signal motif is present at residues 700-705; sequence VKDKFN. Positions 710-734 are required for nuclear speckle localization; sequence IMNRAVSSNVGAYMQPGAREHIAYL.

Belongs to the TFP11/STIP family. As to quaternary structure, identified in the spliceosome C complex. Found in the Intron Large (IL) complex, a post-mRNA release spliceosomal complex containing the excised intron, U2, U5 and U6 snRNPs, and splicing factors. Interacts with TUFT1. Interacts with DHX15; indicative for a recruitment of DHX15 to the IL complex. Interacts with GCFC2.

It is found in the cytoplasm. The protein localises to the nucleus. In terms of biological role, involved in pre-mRNA splicing, specifically in spliceosome disassembly during late-stage splicing events. Intron turnover seems to proceed through reactions in two lariat-intron associated complexes termed Intron Large (IL) and Intron Small (IS). In cooperation with DHX15 seems to mediate the transition of the U2, U5 and U6 snRNP-containing IL complex to the snRNP-free IS complex leading to efficient debranching and turnover of excised introns. May play a role in the differentiation of ameloblasts and odontoblasts or in the forming of the enamel extracellular matrix. The protein is Tuftelin-interacting protein 11 (TFIP11) of Bos taurus (Bovine).